A 514-amino-acid polypeptide reads, in one-letter code: 3-octaprenyl-4-hydroxybenzoate carboxy-lyase (514 aa).

Mn(2+) is bound at residue Asn-177. Prenylated FMN contacts are provided by residues 180–182, 194–196, and 199–200; these read IYR, RWL, and RG. Residue Glu-243 coordinates Mn(2+). Catalysis depends on Asp-314, which acts as the Proton donor.

Belongs to the UbiD family. In terms of assembly, homohexamer. Requires prenylated FMN as cofactor. It depends on Mn(2+) as a cofactor.

The protein resides in the cell membrane. It carries out the reaction a 4-hydroxy-3-(all-trans-polyprenyl)benzoate + H(+) = a 2-(all-trans-polyprenyl)phenol + CO2. The protein operates within cofactor biosynthesis; ubiquinone biosynthesis. Catalyzes the decarboxylation of 3-octaprenyl-4-hydroxy benzoate to 2-octaprenylphenol, an intermediate step in ubiquinone biosynthesis. The protein is 3-octaprenyl-4-hydroxybenzoate carboxy-lyase of Bordetella bronchiseptica (strain ATCC BAA-588 / NCTC 13252 / RB50) (Alcaligenes bronchisepticus).